A 357-amino-acid chain; its full sequence is Elongation factor Ts (357 aa).

The involved in Mg(2+) ion dislocation from EF-Tu stretch occupies residues 82–85 (TDFV).

It belongs to the EF-Ts family.

Its subcellular location is the cytoplasm. Its function is as follows. Associates with the EF-Tu.GDP complex and induces the exchange of GDP to GTP. It remains bound to the aminoacyl-tRNA.EF-Tu.GTP complex up to the GTP hydrolysis stage on the ribosome. The protein is Elongation factor Ts of Campylobacter jejuni (strain RM1221).